The sequence spans 194 residues: Transcriptional repressor NrdR (194 aa).

The segment at C3–C33 is a zinc-finger region. The 91-residue stretch at P48 to E138 folds into the ATP-cone domain. The span at E168–S179 shows a compositional bias: basic and acidic residues. Residues E168–N194 are disordered. Over residues R185–N194 the composition is skewed to pro residues.

This sequence belongs to the NrdR family. It depends on Zn(2+) as a cofactor.

Functionally, negatively regulates transcription of bacterial ribonucleotide reductase nrd genes and operons by binding to NrdR-boxes. The protein is Transcriptional repressor NrdR of Bdellovibrio bacteriovorus (strain ATCC 15356 / DSM 50701 / NCIMB 9529 / HD100).